The primary structure comprises 141 residues: Nucleoside diphosphate kinase (141 aa).

Lysine 9, phenylalanine 57, arginine 85, threonine 91, arginine 102, and asparagine 112 together coordinate ATP. The active-site Pros-phosphohistidine intermediate is the histidine 115.

Belongs to the NDK family. Homotetramer. It depends on Mg(2+) as a cofactor.

Its subcellular location is the cytoplasm. The catalysed reaction is a 2'-deoxyribonucleoside 5'-diphosphate + ATP = a 2'-deoxyribonucleoside 5'-triphosphate + ADP. It catalyses the reaction a ribonucleoside 5'-diphosphate + ATP = a ribonucleoside 5'-triphosphate + ADP. Functionally, major role in the synthesis of nucleoside triphosphates other than ATP. The ATP gamma phosphate is transferred to the NDP beta phosphate via a ping-pong mechanism, using a phosphorylated active-site intermediate. In Chlamydia trachomatis serovar A (strain ATCC VR-571B / DSM 19440 / HAR-13), this protein is Nucleoside diphosphate kinase.